We begin with the raw amino-acid sequence, 219 residues long: Phosphate-specific transport system accessory protein PhoU homolog (219 aa).

The protein belongs to the PhoU family. In terms of assembly, homodimer.

The protein resides in the cytoplasm. Plays a role in the regulation of phosphate uptake. Encoded together with proteins of the phosphate-specific transport (Pst) system in the polycistronic pstSCAB-phoU operon. In Clostridium acetobutylicum (strain ATCC 824 / DSM 792 / JCM 1419 / IAM 19013 / LMG 5710 / NBRC 13948 / NRRL B-527 / VKM B-1787 / 2291 / W), this protein is Phosphate-specific transport system accessory protein PhoU homolog.